A 198-amino-acid polypeptide reads, in one-letter code: Glycerol-3-phosphate acyltransferase (198 aa).

A run of 6 helical transmembrane segments spans residues 1–21 (MNLL…GYLA), 53–73 (IIVF…AKYL), 79–99 (WQVA…WLNW), 111–131 (IFLG…IIMI), 136–156 (IVSL…FLSF), and 158–178 (GSNI…LVIW).

Belongs to the PlsY family. As to quaternary structure, probably interacts with PlsX.

It localises to the cell inner membrane. It carries out the reaction an acyl phosphate + sn-glycerol 3-phosphate = a 1-acyl-sn-glycero-3-phosphate + phosphate. The protein operates within lipid metabolism; phospholipid metabolism. Functionally, catalyzes the transfer of an acyl group from acyl-phosphate (acyl-PO(4)) to glycerol-3-phosphate (G3P) to form lysophosphatidic acid (LPA). This enzyme utilizes acyl-phosphate as fatty acyl donor, but not acyl-CoA or acyl-ACP. In Prochlorococcus marinus (strain NATL1A), this protein is Glycerol-3-phosphate acyltransferase.